A 204-amino-acid polypeptide reads, in one-letter code: LexA repressor (204 aa).

The H-T-H motif DNA-binding region spans 29–49 (VREIGDAVGLMSSSTVHGHLQ). Active-site for autocatalytic cleavage activity residues include Ser-127 and Lys-164.

Belongs to the peptidase S24 family. As to quaternary structure, homodimer.

It carries out the reaction Hydrolysis of Ala-|-Gly bond in repressor LexA.. Functionally, represses a number of genes involved in the response to DNA damage (SOS response), including recA and lexA. In the presence of single-stranded DNA, RecA interacts with LexA causing an autocatalytic cleavage which disrupts the DNA-binding part of LexA, leading to derepression of the SOS regulon and eventually DNA repair. This is LexA repressor from Desulfitobacterium hafniense (strain DSM 10664 / DCB-2).